The sequence spans 179 residues: Large ribosomal subunit protein uL6 (179 aa).

It belongs to the universal ribosomal protein uL6 family. In terms of assembly, part of the 50S ribosomal subunit.

Functionally, this protein binds to the 23S rRNA, and is important in its secondary structure. It is located near the subunit interface in the base of the L7/L12 stalk, and near the tRNA binding site of the peptidyltransferase center. This is Large ribosomal subunit protein uL6 from Mycoplasmopsis pulmonis (strain UAB CTIP) (Mycoplasma pulmonis).